We begin with the raw amino-acid sequence, 87 residues long: Small ribosomal subunit protein bS20 (87 aa).

The protein belongs to the bacterial ribosomal protein bS20 family.

In terms of biological role, binds directly to 16S ribosomal RNA. The polypeptide is Small ribosomal subunit protein bS20 (Shigella flexneri serotype 5b (strain 8401)).